We begin with the raw amino-acid sequence, 143 residues long: Transcriptional regulator MraZ (143 aa).

SpoVT-AbrB domains lie at Glu5–Glu47 and Ala76–Arg119.

Belongs to the MraZ family. Forms oligomers.

The protein localises to the cytoplasm. It localises to the nucleoid. The sequence is that of Transcriptional regulator MraZ from Lactobacillus delbrueckii subsp. bulgaricus (strain ATCC 11842 / DSM 20081 / BCRC 10696 / JCM 1002 / NBRC 13953 / NCIMB 11778 / NCTC 12712 / WDCM 00102 / Lb 14).